The primary structure comprises 445 residues: N-succinylarginine dihydrolase (445 aa).

Residues 19–28, asparagine 110, and 137–138 contribute to the substrate site; these read AGLSFGNVAS and HR. Residue glutamate 174 is part of the active site. Arginine 214 contributes to the substrate binding site. The active site involves histidine 250. Residues aspartate 252 and asparagine 363 each coordinate substrate. Cysteine 369 functions as the Nucleophile in the catalytic mechanism.

Belongs to the succinylarginine dihydrolase family. As to quaternary structure, homodimer.

The catalysed reaction is N(2)-succinyl-L-arginine + 2 H2O + 2 H(+) = N(2)-succinyl-L-ornithine + 2 NH4(+) + CO2. It functions in the pathway amino-acid degradation; L-arginine degradation via AST pathway; L-glutamate and succinate from L-arginine: step 2/5. Catalyzes the hydrolysis of N(2)-succinylarginine into N(2)-succinylornithine, ammonia and CO(2). The polypeptide is N-succinylarginine dihydrolase (Shewanella sediminis (strain HAW-EB3)).